A 443-amino-acid polypeptide reads, in one-letter code: Histidinol dehydrogenase (443 aa).

NAD(+)-binding residues include tyrosine 127, glutamine 185, and asparagine 208. Residues serine 234, glutamine 256, and histidine 259 each coordinate substrate. Glutamine 256 and histidine 259 together coordinate Zn(2+). Catalysis depends on proton acceptor residues glutamate 323 and histidine 324. Substrate contacts are provided by histidine 324, aspartate 357, glutamate 411, and histidine 416. Aspartate 357 is a Zn(2+) binding site. Histidine 416 contributes to the Zn(2+) binding site.

The protein belongs to the histidinol dehydrogenase family. Requires Zn(2+) as cofactor.

It catalyses the reaction L-histidinol + 2 NAD(+) + H2O = L-histidine + 2 NADH + 3 H(+). It participates in amino-acid biosynthesis; L-histidine biosynthesis; L-histidine from 5-phospho-alpha-D-ribose 1-diphosphate: step 9/9. In terms of biological role, catalyzes the sequential NAD-dependent oxidations of L-histidinol to L-histidinaldehyde and then to L-histidine. The sequence is that of Histidinol dehydrogenase from Photobacterium profundum (strain SS9).